The primary structure comprises 279 residues: Prephenate dehydratase (279 aa).

In terms of domain architecture, Prephenate dehydratase spans 2-178 (KIAYLGPRGS…NSTRFWLLGK (177 aa)). One can recognise an ACT domain in the interval 194-270 (LALTLPDNLP…LGVKVRLLGN (77 aa)).

The enzyme catalyses prephenate + H(+) = 3-phenylpyruvate + CO2 + H2O. It participates in amino-acid biosynthesis; L-phenylalanine biosynthesis; phenylpyruvate from prephenate: step 1/1. The sequence is that of Prephenate dehydratase (pheA) from Lactococcus lactis subsp. lactis (strain IL1403) (Streptococcus lactis).